The following is a 398-amino-acid chain: Minor cardiolipin synthase ClsB (398 aa).

The helical transmembrane segment at 3–23 (VFIVIMIIVVIFFALILLDIF) threads the bilayer. PLD phosphodiesterase domains are found at residues 141–168 (MQKR…AEEY) and 311–338 (YQGF…DKRS).

It belongs to the phospholipase D family. Cardiolipin synthase subfamily.

Its subcellular location is the cell membrane. Involved in the biosynthesis of cardiolipin. The sequence is that of Minor cardiolipin synthase ClsB (clsB) from Bacillus subtilis (strain 168).